Here is an 807-residue protein sequence, read N- to C-terminus: PGC-1 and ERR-induced regulator in muscle protein 1 (807 aa).

Disordered regions lie at residues 29–80, 121–391, and 517–548; these read QADL…EDVA, CPGQ…TPAS, and PSHEDSGSGEPTGSPFLTPEQPPVPRTAAGSR. Composition is skewed to low complexity over residues 40 to 52 and 145 to 160; these read SSDIDQGDSSGSS and PAPSSPSKAPHSPESP. Polar residues predominate over residues 162–171; sequence HSDNPQSSPD. Residues 180–194 are compositionally biased toward basic residues; it reads PGRKKRRAVGAKGTK. Polar residues-rich tracts occupy residues 195-211, 311-346, and 363-391; these read HSGSLDSAATQMSSPQL, KPQSDIASSTHPFTPDVSLSTLAFKCQPNTNQSTPA, and ALSTPASEPDTALSTPASEPDTALSTPAS. Ser-198 is modified (phosphoserine). A Phosphothreonine modification is found at Thr-534. Omega-N-methylarginine is present on Arg-548.

As to expression, highly expressed in skeletal muscles and heart with lower levels in brown adipose tissue (at protein level). Muscle-specific expression is increased by endurance exercise.

The protein resides in the cytoplasm. Its subcellular location is the nucleus. Its function is as follows. Regulates the expression of selective PPARGC1A/B and ESRRA/B/G target genes with roles in glucose and lipid metabolism, energy transfer, contractile function, muscle mitochondrial biogenesis and oxidative capacity. Required for the efficient induction of MT-CO2, MT-CO3, COX4I1, TFB1M, TFB2M, POLRMT and SIRT3 by PPARGC1A. Positively regulates the PPARGC1A/ESRRG-induced expression of CKMT2, TNNI3 and SLC2A4 and negatively regulates the PPARGC1A/ESRRG-induced expression of PDK4. This Mus musculus (Mouse) protein is PGC-1 and ERR-induced regulator in muscle protein 1 (Perm1).